We begin with the raw amino-acid sequence, 443 residues long: 2-hydroxyethylphosphonate dioxygenase (443 aa).

The 56-residue stretch at 8–63 folds into the HTH cro/C1-type 1 domain; sequence LAHWMNARKYTAAQTADLAGLPLDDLRRLLGDEANEPDPAAATALAEALSVEPSQL. Residue Lys-16 participates in substrate binding. A DNA-binding region (H-T-H motif) is located at residues 19 to 38; that stretch reads AAQTADLAGLPLDDLRRLLG. Substrate-binding residues include Tyr-98 and Asn-126. Position 129 (His-129) interacts with Fe cation. The substrate site is built by Glu-176, His-182, and Ser-196. Residue His-182 participates in Fe cation binding. Residues 234–290 enclose the HTH cro/C1-type 2 domain; sequence VLDLFLARRAHTRTSAAEAAGVPPADLEAALRSPASETGLTVLRTLGRALGFDYRVL. A DNA-binding region (H-T-H motif) is located at residues 245 to 265; it reads TRTSAAEAAGVPPADLEAALR.

It belongs to the non-heme iron-dependent dioxygenase family. In terms of assembly, homodimer. The cofactor is Fe(2+).

It catalyses the reaction 2-hydroxyethylphosphonate + O2 = hydroxymethylphosphonate + formate + H(+). The protein operates within secondary metabolite biosynthesis; bialaphos biosynthesis. Non-heme-dependent dioxygenase that catalyzes the conversion of 2-hydroxyethylphosphonate (HEP) to hydroxymethylphosphonate (HMP) in the biosynthesis of phosphinothricin tripeptide (PTT), also known as bialaphos (BA), a natural-product antibiotic and potent herbicide. PTT contains the unusual amino acid phosphinothricin attached to 2 alanine residues. Synthetic phosphinothricin (glufosinate) is a key component of commercial herbicides. The sequence is that of 2-hydroxyethylphosphonate dioxygenase (hepD) from Streptomyces viridochromogenes (strain DSM 40736 / JCM 4977 / BCRC 1201 / Tue 494).